The chain runs to 166 residues: MGEEISAIDLVMANDQLVSTSDASDIPYDPYSQFWGKVLVLTFGIICVVFVIFMLHHERIKACRTIISAREQQRTQHSIHRRERSSSGASQQFEHHVRQTDCLPLYEPITALNQQYLKTLPTTSTPPPPAIFDENGEFVGDVPSVAGAIERPPSYESLPAPQNDEV.

Residues 34–54 (FWGKVLVLTFGIICVVFVIFM) traverse the membrane as a helical segment. Disordered stretches follow at residues 73-93 (QRTQ…SQQF) and 123-166 (TSTP…NDEV).

Its subcellular location is the vacuole membrane. This is an uncharacterized protein from Schizosaccharomyces pombe (strain 972 / ATCC 24843) (Fission yeast).